The primary structure comprises 319 residues: MDEMKVIEIIKKTLKFSNENIVKGIDDDCAIIKIDENFYLVATTDMMVKKAHIPSILSPYEIGGRILTANVSDIASMGAKPLAFLVSISLSKEEANEKFIKELYSGLDDFSKLYDCPVVGGDTNRGDELILSGTAFGITDNPIYRRGKVGDDICVTNDLGRVYCALTLYYMLKENKISYKEFERLCQKYPKIIEKLRKPIARIKEGLLMNKLINGCCDISDGLGKEITYFKNFEIYSDRIFKLIPEDVIEFCDAFNLNPIKVALNSGEEFELLFTTSKFNKVKDSLKGYSKIYKIGKIIEDGQFIDGEEFYGGGYIHKW.

4 residues coordinate Mg(2+): Asp-28, Thr-43, Thr-44, and Asp-45. His-52 is a binding site for substrate. Asp-73 serves as a coordination point for Mg(2+). Residues Tyr-104, 121 to 122, and Arg-145 each bind ATP; that span reads GD. Asp-122 is a binding site for Mg(2+). Asp-218 contributes to the Mg(2+) binding site. Ser-220 lines the ATP pocket. Position 221 (Asp-221) interacts with Mg(2+). Substrate is bound by residues Glu-268 and Tyr-315.

The protein belongs to the thiamine-monophosphate kinase family.

It catalyses the reaction thiamine phosphate + ATP = thiamine diphosphate + ADP. The protein operates within cofactor biosynthesis; thiamine diphosphate biosynthesis; thiamine diphosphate from thiamine phosphate: step 1/1. Functionally, catalyzes the ATP-dependent phosphorylation of thiamine-monophosphate (TMP) to form thiamine-pyrophosphate (TPP), the active form of vitamin B1. The protein is Thiamine-monophosphate kinase of Methanocaldococcus jannaschii (strain ATCC 43067 / DSM 2661 / JAL-1 / JCM 10045 / NBRC 100440) (Methanococcus jannaschii).